Reading from the N-terminus, the 691-residue chain is DNA ligase (691 aa).

Residues 56–60 (DRAYD), 104–105 (SI), and E139 each bind NAD(+). Catalysis depends on K141, which acts as the N6-AMP-lysine intermediate. 4 residues coordinate NAD(+): R162, E198, K314, and K338. Residues C429, C432, C445, and C451 each contribute to the Zn(2+) site. The BRCT domain maps to 607-691 (TAGDALSGQT…SLLESHGIEI (85 aa)).

This sequence belongs to the NAD-dependent DNA ligase family. LigA subfamily. Mg(2+) is required as a cofactor. Requires Mn(2+) as cofactor.

The enzyme catalyses NAD(+) + (deoxyribonucleotide)n-3'-hydroxyl + 5'-phospho-(deoxyribonucleotide)m = (deoxyribonucleotide)n+m + AMP + beta-nicotinamide D-nucleotide.. DNA ligase that catalyzes the formation of phosphodiester linkages between 5'-phosphoryl and 3'-hydroxyl groups in double-stranded DNA using NAD as a coenzyme and as the energy source for the reaction. It is essential for DNA replication and repair of damaged DNA. In Natronomonas pharaonis (strain ATCC 35678 / DSM 2160 / CIP 103997 / JCM 8858 / NBRC 14720 / NCIMB 2260 / Gabara) (Halobacterium pharaonis), this protein is DNA ligase.